Consider the following 441-residue polypeptide: MNPVVISVCVMLVLALMRVNVVVALTFSAIVGGLVAGMSLGDTVAAFESGLGGGATIALSYAMLGTFAVAISKSGITDLLAKSVIKRLNGKESAASTTGLKYAVLVALVLVTMSSQNVIPVHIAFIPILIPPLLGVFAKLKLDRRLIACVLTFGLITPYMVLPVGFGGIFLNNILLKNLHDNGLENVVASQVPTAMLLPGAGMIFGLLLAIFVSYRKPREYKETELTVVHETDHSINKQHILVAALGIIAALGVQLYTGSMIIGALAGFMVFTFGGVIAWKETHDVFTKGVHMMAMIGFIMIAAAGFAAVMKQTGGVETLVQSLSTSIGDNKPLAALLMLVVGLLVTMGIGSSFSTIPILATIYVPLSLAFGFSPMATIALVGTAAALGDAGSPASDSTLGPTSGLNADGQHEHIWETVVPTFIHYNIPLIIFGWIAAMVL.

12 consecutive transmembrane segments (helical) span residues 21–41 (VVVA…MSLG), 51–71 (LGGG…AVAI), 94–114 (AAST…VTMS), 118–138 (VIPV…GVFA), 150–170 (VLTF…GGIF), 195–215 (AMLL…FVSY), 239–259 (QHIL…LYTG), 260–280 (SMII…VIAW), 291–311 (VHMM…AAVM), 334–354 (LAAL…GSSF), 363–383 (IYVP…ALVG), and 419–439 (VVPT…IAAM).

Its subcellular location is the cell membrane. This is an uncharacterized protein from Vibrio parahaemolyticus serotype O3:K6 (strain RIMD 2210633).